Here is a 216-residue protein sequence, read N- to C-terminus: Pyridoxine/pyridoxamine 5'-phosphate oxidase (216 aa).

Residues 12–15 (RREY) and Lys70 contribute to the substrate site. FMN-binding positions include 65–70 (RLVLLK), 80–81 (YT), Arg86, Lys87, and Gln109. Substrate-binding residues include Tyr127, Arg131, and Ser135. FMN contacts are provided by residues 144–145 (QS) and Trp189. 195 to 197 (RLH) contributes to the substrate binding site. Arg199 contributes to the FMN binding site.

The protein belongs to the pyridoxamine 5'-phosphate oxidase family. In terms of assembly, homodimer. It depends on FMN as a cofactor.

The catalysed reaction is pyridoxamine 5'-phosphate + O2 + H2O = pyridoxal 5'-phosphate + H2O2 + NH4(+). It catalyses the reaction pyridoxine 5'-phosphate + O2 = pyridoxal 5'-phosphate + H2O2. Its pathway is cofactor metabolism; pyridoxal 5'-phosphate salvage; pyridoxal 5'-phosphate from pyridoxamine 5'-phosphate: step 1/1. The protein operates within cofactor metabolism; pyridoxal 5'-phosphate salvage; pyridoxal 5'-phosphate from pyridoxine 5'-phosphate: step 1/1. Functionally, catalyzes the oxidation of either pyridoxine 5'-phosphate (PNP) or pyridoxamine 5'-phosphate (PMP) into pyridoxal 5'-phosphate (PLP). This Baumannia cicadellinicola subsp. Homalodisca coagulata protein is Pyridoxine/pyridoxamine 5'-phosphate oxidase.